A 185-amino-acid chain; its full sequence is CASP-like protein 5A1 (185 aa).

The Cytoplasmic portion of the chain corresponds to 1–45 (MNVSHPAVHPVGVPPALGGHAVPPRMRMRVRMEYLVFQGMPLPGT). The chain crosses the membrane as a helical span at residues 46–66 (LGGLVLRLGQFCSALIAFSVM). Over 67–76 (LSVRDFSVTA) the chain is Extracellular. Residues 77 to 97 (FCYLVAATVLQCLWSLAMAVI) form a helical membrane-spanning segment. Topologically, residues 98–121 (DVYALLVKRSLRNPLLVSIFVVGD) are cytoplasmic. The chain crosses the membrane as a helical span at residues 122–142 (GVTATLTFAAACASAGVIVLI). Residues 143 to 160 (GNDIAMCKDNPCANYEAA) are Extracellular-facing. Residues 161-181 (IIMAFLSWFMVSISFILTFWL) form a helical membrane-spanning segment. Topologically, residues 182–185 (LATL) are cytoplasmic.

It belongs to the Casparian strip membrane proteins (CASP) family. In terms of assembly, homodimer and heterodimers.

The protein localises to the cell membrane. The polypeptide is CASP-like protein 5A1 (Picea sitchensis (Sitka spruce)).